A 160-amino-acid polypeptide reads, in one-letter code: Cytochrome b6-f complex subunit 4 (160 aa).

3 helical membrane-spanning segments follow: residues 36 to 56, 95 to 115, and 131 to 151; these read LLYV…ALAV, LLGV…PFIE, and TVFL…ALPL.

This sequence belongs to the cytochrome b family. PetD subfamily. As to quaternary structure, the 4 large subunits of the cytochrome b6-f complex are cytochrome b6, subunit IV (17 kDa polypeptide, PetD), cytochrome f and the Rieske protein, while the 4 small subunits are PetG, PetL, PetM and PetN. The complex functions as a dimer.

It is found in the cellular thylakoid membrane. Its function is as follows. Component of the cytochrome b6-f complex, which mediates electron transfer between photosystem II (PSII) and photosystem I (PSI), cyclic electron flow around PSI, and state transitions. This Nostoc punctiforme (strain ATCC 29133 / PCC 73102) protein is Cytochrome b6-f complex subunit 4.